The sequence spans 335 residues: N-lysine methyltransferase KMT5A-A (335 aa).

Disordered regions lie at residues 1 to 91 (MGRG…EVEK) and 133 to 183 (LPPE…EIES). The span at 67-91 (SVTHHESKCLGKPSTETRKKAEVEK) shows a compositional bias: basic and acidic residues. The span at 145–161 (VKNKPLRKKTQRQKSPN) shows a compositional bias: basic residues. One can recognise an SET domain in the interval 199 to 320 (EGIKMHMITG…VGEELLYDYG (122 aa)). Residues 209 to 211 (KGR), tyrosine 254, and 281 to 282 (NH) each bind S-adenosyl-L-methionine.

Belongs to the class V-like SAM-binding methyltransferase superfamily. Histone-lysine methyltransferase family. PR/SET subfamily.

The protein localises to the nucleus. The protein resides in the chromosome. The enzyme catalyses L-lysyl(20)-[histone H4] + S-adenosyl-L-methionine = N(6)-methyl-L-lysyl(20)-[histone H4] + S-adenosyl-L-homocysteine + H(+). It catalyses the reaction L-lysyl-[protein] + S-adenosyl-L-methionine = N(6)-methyl-L-lysyl-[protein] + S-adenosyl-L-homocysteine + H(+). Functionally, protein-lysine N-methyltransferase that monomethylates both histones and non-histone proteins. Specifically monomethylates 'Lys-20' of histone H4 (H4K20me1). H4K20me1 is enriched during mitosis and represents a specific tag for epigenetic transcriptional repression. Mainly functions in euchromatin regions, thereby playing a central role in the silencing of euchromatic genes. Required for cell proliferation, probably by contributing to the maintenance of proper higher-order structure of DNA during mitosis. Involved in chromosome condensation and proper cytokinesis. This chain is N-lysine methyltransferase KMT5A-A, found in Xenopus laevis (African clawed frog).